A 252-amino-acid polypeptide reads, in one-letter code: NAC domain-containing protein 83 (252 aa).

An NAC domain is found at 14–160; sequence LPPGFRFHPT…NWVLCRIFLK (147 aa). Residues 110 to 166 mediate DNA binding; the sequence is VGLKKTLVFYKGKPPHGSRTDWIMHEYRLSSSPPSSMGPTQNWVLCRIFLKKRAGNK. Disordered stretches follow at residues 165-194 and 217-252; these read NKNDDDDGDSRNLRHNNNNNSSDQIEIITT and LNLLPSSPSSDHASSGVTTEIFSSSDEETSSCNSFR. 2 stretches are compositionally biased toward low complexity: residues 180 to 194 and 219 to 252; these read NNNNNSSDQIEIITT and LLPSSPSSDHASSGVTTEIFSSSDEETSSCNSFR. The interval 213-226 is PEST-like; the sequence is RTTDLNLLPSSPSS.

As to quaternary structure, interacts with NAC007/VND4, NAC026/VND5 and NAC030/VND7. Interacts with the mungbean yellow mosaic virus (MYMV) AC1 replication-associated protein. Expressed in xylem and phloem cells in roots and inflorescence stems. Highly expressed in senescent leaves. Expressed in roots, and abscission and dehiscence tissues, such as axils of bracts and abscission zones in cauline leaves and siliques.

The protein resides in the nucleus. Its function is as follows. Transcriptional repressor that negatively regulates the expression of genes involved in xylem vessel formation. Represses the transcriptional activation activity of NAC030/VND7, which regulates protoxylem vessel differentiation by promoting immature xylem vessel-specific genes expression. Transcriptional activator that regulates the COLD-REGULATED (COR15A and COR15B) and RESPONSIVE TO DEHYDRATION (LTI78/RD29A and LTI65/RD29B) genes by binding directly to their promoters. Mediates signaling crosstalk between salt stress response and leaf aging process. May play a role in DNA replication of mungbean yellow mosaic virus. In Arabidopsis thaliana (Mouse-ear cress), this protein is NAC domain-containing protein 83.